Consider the following 842-residue polypeptide: Circularly permutated Ras protein 1 (842 aa).

Residues 62–66 (DTAGQ), 121–124 (NKVD), and 181–188 (GGGGVGKS) each bind GTP. The interval 253–274 (SGKDKQPSPQQAASPSTIDRTG) is disordered. A compositionally biased stretch (polar residues) spans 259–274 (PSPQQAASPSTIDRTG). A VWFA domain is found at 377–627 (IIIYCIDVSG…TQNPMIATDV (251 aa)).

This sequence belongs to the small GTPase superfamily. CpRas family.

In Dictyostelium discoideum (Social amoeba), this protein is Circularly permutated Ras protein 1 (cpras1).